A 127-amino-acid polypeptide reads, in one-letter code: Fluoride-specific ion channel FluC (127 aa).

4 consecutive transmembrane segments (helical) span residues P4–L24, G36–A56, L68–V88, and W98–I118. Na(+) is bound by residues G75 and S78.

It belongs to the fluoride channel Fluc/FEX (TC 1.A.43) family.

It is found in the cell inner membrane. It carries out the reaction fluoride(in) = fluoride(out). Its activity is regulated as follows. Na(+) is not transported, but it plays an essential structural role and its presence is essential for fluoride channel function. Functionally, fluoride-specific ion channel. Important for reducing fluoride concentration in the cell, thus reducing its toxicity. The polypeptide is Fluoride-specific ion channel FluC (Nitrosomonas europaea (strain ATCC 19718 / CIP 103999 / KCTC 2705 / NBRC 14298)).